A 577-amino-acid chain; its full sequence is Hemagglutinin-neuraminidase (577 aa).

Residues 1-26 (MDRAVSQVALENDEREAKNTWRLIFR) are Intravirion-facing. A helical transmembrane segment spans residues 27–47 (IAILFLTVVTLAISVASLLYS). At 48-577 (MGASTPSDLV…DDGVREARSG (530 aa)) the chain is on the virion surface side. Residues 124 to 152 (GAPIHDPDYIGGIGKELIVDDASDVTSFY) form an important for interaction with fusion/F protein region. 4 N-linked (GlcNAc...) asparagine; by host glycosylation sites follow: Asn341, Asn433, Asn481, and Asn538.

It belongs to the paramyxoviruses hemagglutinin-neuraminidase family. As to quaternary structure, homotetramer; composed of disulfide-linked homodimers. Interacts with F protein trimer. Interacts with host CG-1B; this interaction inhibits viral adsorption and replication rather than internalization.

The protein resides in the virion membrane. Its subcellular location is the host cell membrane. It carries out the reaction Hydrolysis of alpha-(2-&gt;3)-, alpha-(2-&gt;6)-, alpha-(2-&gt;8)- glycosidic linkages of terminal sialic acid residues in oligosaccharides, glycoproteins, glycolipids, colominic acid and synthetic substrates.. Functionally, mediates the viral entry into the host cell together with fusion/F protein. Attaches the virus to sialic acid-containing cell receptors and thereby initiates infection. Binding of HN protein to the receptor induces a conformational change that allows the F protein to trigger virion/cell membranes fusion. In terms of biological role, neuraminidase activity ensures the efficient spread of the virus by dissociating the mature virions from the neuraminic acid containing glycoproteins. This chain is Hemagglutinin-neuraminidase (HN), found in Gallus gallus (Chicken).